A 174-amino-acid polypeptide reads, in one-letter code: Small ribosomal subunit protein uS5 (174 aa).

The S5 DRBM domain maps to 16–79 (FSELIVSVRR…NAARKNMIRV (64 aa)).

It belongs to the universal ribosomal protein uS5 family. As to quaternary structure, part of the 30S ribosomal subunit. Contacts proteins S4 and S8.

Its function is as follows. With S4 and S12 plays an important role in translational accuracy. In terms of biological role, located at the back of the 30S subunit body where it stabilizes the conformation of the head with respect to the body. The sequence is that of Small ribosomal subunit protein uS5 from Ehrlichia ruminantium (strain Gardel).